Reading from the N-terminus, the 435-residue chain is Serine--tRNA ligase (435 aa).

L-serine is bound at residue 233–235 (TAE). Position 264–266 (264–266 (RAE)) interacts with ATP. E287 lines the L-serine pocket. ATP is bound at residue 351 to 354 (EISS). S386 serves as a coordination point for L-serine.

It belongs to the class-II aminoacyl-tRNA synthetase family. Type-1 seryl-tRNA synthetase subfamily. In terms of assembly, homodimer. The tRNA molecule binds across the dimer.

The protein resides in the cytoplasm. The enzyme catalyses tRNA(Ser) + L-serine + ATP = L-seryl-tRNA(Ser) + AMP + diphosphate + H(+). It catalyses the reaction tRNA(Sec) + L-serine + ATP = L-seryl-tRNA(Sec) + AMP + diphosphate + H(+). Its pathway is aminoacyl-tRNA biosynthesis; selenocysteinyl-tRNA(Sec) biosynthesis; L-seryl-tRNA(Sec) from L-serine and tRNA(Sec): step 1/1. Catalyzes the attachment of serine to tRNA(Ser). Is also able to aminoacylate tRNA(Sec) with serine, to form the misacylated tRNA L-seryl-tRNA(Sec), which will be further converted into selenocysteinyl-tRNA(Sec). The chain is Serine--tRNA ligase from Anaeromyxobacter dehalogenans (strain 2CP-C).